The primary structure comprises 494 residues: MTHYILAIDQGTTSSRAILFDEKGSRVGQSQQEFPQIFPDDGWVEHDPEDIWSSTLAVCRSVLKDTGIDAQAIATIGITNQRETTILWDIDTGKPVYNAIVWQDRRTSGFCQSLSDQGLSEKVQEKTGLLIDPYFSATKIRWILDNVDGARETAQSGRLAFGTVDSFLLWRLTNGKSHKTDATNAARTMAFNIHTQEWDDELIELLGIGDVLFPEVMDCSADFGVIDASWLGAEIPVNGIAGDQQAALVGQACFTPGMVKSTYGTGCFMILNTGDKAIRSEHKLLTTVGYRLNGKVTYALEGSIFVAGAAIQWLRDGLKLFADAKETQSLAKQALNDDSVYLVPAFTGLGAPYWDPDARGAMIGLTRDTSVADIVSAGLRSVCYQTKDLVGAMAQDGATFSSLRVDGGMVINDVMVQFLSDLLEITVERPCVTETTALGAAFLAGLQVGLYQSLDEIEVLWKADKCFEPTMEKGTGDKLYQGWQKAVDRVRTRD.

Position 12 (Thr-12) interacts with ADP. Thr-12, Thr-13, and Ser-14 together coordinate ATP. A sn-glycerol 3-phosphate-binding site is contributed by Thr-12. Arg-16 is a binding site for ADP. Residues Arg-82, Glu-83, Tyr-134, and Asp-243 each coordinate sn-glycerol 3-phosphate. Arg-82, Glu-83, Tyr-134, Asp-243, and Gln-244 together coordinate glycerol. Residues Thr-265 and Gly-308 each contribute to the ADP site. ATP is bound by residues Thr-265, Gly-308, Gln-312, and Gly-408. The ADP site is built by Gly-408 and Asn-412.

Belongs to the FGGY kinase family.

The enzyme catalyses glycerol + ATP = sn-glycerol 3-phosphate + ADP + H(+). Its pathway is polyol metabolism; glycerol degradation via glycerol kinase pathway; sn-glycerol 3-phosphate from glycerol: step 1/1. Its activity is regulated as follows. Inhibited by fructose 1,6-bisphosphate (FBP). Its function is as follows. Key enzyme in the regulation of glycerol uptake and metabolism. Catalyzes the phosphorylation of glycerol to yield sn-glycerol 3-phosphate. This is Glycerol kinase from Marinomonas sp. (strain MWYL1).